The chain runs to 289 residues: Phosphatidylserine decarboxylase proenzyme (289 aa).

Catalysis depends on charge relay system; for autoendoproteolytic cleavage activity residues aspartate 89, histidine 146, and serine 252. Residue serine 252 is the Schiff-base intermediate with substrate; via pyruvic acid; for decarboxylase activity of the active site. Serine 252 is subject to Pyruvic acid (Ser); by autocatalysis.

The protein belongs to the phosphatidylserine decarboxylase family. PSD-B subfamily. Prokaryotic type I sub-subfamily. In terms of assembly, heterodimer of a large membrane-associated beta subunit and a small pyruvoyl-containing alpha subunit. Pyruvate is required as a cofactor. In terms of processing, is synthesized initially as an inactive proenzyme. Formation of the active enzyme involves a self-maturation process in which the active site pyruvoyl group is generated from an internal serine residue via an autocatalytic post-translational modification. Two non-identical subunits are generated from the proenzyme in this reaction, and the pyruvate is formed at the N-terminus of the alpha chain, which is derived from the carboxyl end of the proenzyme. The autoendoproteolytic cleavage occurs by a canonical serine protease mechanism, in which the side chain hydroxyl group of the serine supplies its oxygen atom to form the C-terminus of the beta chain, while the remainder of the serine residue undergoes an oxidative deamination to produce ammonia and the pyruvoyl prosthetic group on the alpha chain. During this reaction, the Ser that is part of the protease active site of the proenzyme becomes the pyruvoyl prosthetic group, which constitutes an essential element of the active site of the mature decarboxylase.

The protein resides in the cell membrane. The enzyme catalyses a 1,2-diacyl-sn-glycero-3-phospho-L-serine + H(+) = a 1,2-diacyl-sn-glycero-3-phosphoethanolamine + CO2. The protein operates within phospholipid metabolism; phosphatidylethanolamine biosynthesis; phosphatidylethanolamine from CDP-diacylglycerol: step 2/2. In terms of biological role, catalyzes the formation of phosphatidylethanolamine (PtdEtn) from phosphatidylserine (PtdSer). The sequence is that of Phosphatidylserine decarboxylase proenzyme from Shewanella putrefaciens (strain CN-32 / ATCC BAA-453).